Reading from the N-terminus, the 428-residue chain is Enolase (428 aa).

A (2R)-2-phosphoglycerate-binding site is contributed by Q163. Catalysis depends on E205, which acts as the Proton donor. Mg(2+) is bound by residues D242, E285, and D312. K337, R366, S367, and K388 together coordinate (2R)-2-phosphoglycerate. K337 functions as the Proton acceptor in the catalytic mechanism.

This sequence belongs to the enolase family. The cofactor is Mg(2+).

It localises to the cytoplasm. The protein resides in the secreted. It is found in the cell surface. The catalysed reaction is (2R)-2-phosphoglycerate = phosphoenolpyruvate + H2O. Its pathway is carbohydrate degradation; glycolysis; pyruvate from D-glyceraldehyde 3-phosphate: step 4/5. Catalyzes the reversible conversion of 2-phosphoglycerate (2-PG) into phosphoenolpyruvate (PEP). It is essential for the degradation of carbohydrates via glycolysis. The polypeptide is Enolase (Neisseria meningitidis serogroup B (strain ATCC BAA-335 / MC58)).